Here is a 185-residue protein sequence, read N- to C-terminus: MISSNDFRPGVTIELDGSVWRVVEFLHVKPGKGSAFVRTKLKNVQNGNVVERTFRAGETVPQATLDKRAMQHTYKDSDQFVFMDMETYEETNLSSEQIGERVKYLNEGMEVNVIMWGEQVIEVELPNSVVLEVIETDPGVKGDTATGGSKPATVETGAQIMVPLFISKGERIKIDTRNDSYLGRE.

The protein belongs to the elongation factor P family.

It is found in the cytoplasm. It participates in protein biosynthesis; polypeptide chain elongation. In terms of biological role, involved in peptide bond synthesis. Stimulates efficient translation and peptide-bond synthesis on native or reconstituted 70S ribosomes in vitro. Probably functions indirectly by altering the affinity of the ribosome for aminoacyl-tRNA, thus increasing their reactivity as acceptors for peptidyl transferase. This chain is Elongation factor P, found in Trichodesmium erythraeum (strain IMS101).